Consider the following 281-residue polypeptide: CLA biosynthesis isomerase (281 aa).

The protein belongs to the ADC family.

The protein localises to the cytoplasm. The enzyme catalyses 10-oxo-(12Z)-octadecenoate = 10-oxo-(11E)-octadecenoate. It participates in lipid metabolism; fatty acid metabolism. Is involved in a saturation metabolic pathway of polyunsaturated fatty acids, that detoxifies unsaturated fatty acids and generates hydroxy fatty acids, oxo fatty acids, conjugated fatty acids such as conjugated linoleic acids (CLAs), and partially saturated trans-fatty acids as intermediates. CLA-DC catalyzes the migration of the carbon-carbon double bond in 10-oxo-(12Z)-octadecenoate to produce 10-oxo-(11E)-octadecenoate, during linoleate metabolism. As part of the gut microbiome, this enzyme modifies host fatty acid composition and is expected to improve human health by altering lipid metabolism related to the onset of metabolic syndrome. The protein is CLA biosynthesis isomerase of Lactiplantibacillus plantarum (Lactobacillus plantarum).